Reading from the N-terminus, the 369-residue chain is Pulmonary surfactant-associated protein D (369 aa).

The signal sequence occupies residues 1-20 (MLLLPLSVLLLLTQPWRSLG). S-nitrosocysteine occurs at positions 35 and 40. The interval 41-215 (SPPEDGLPGR…ERGAKGESGL (175 aa)) is disordered. The Collagen-like domain maps to 46-216 (GLPGRDGRDG…RGAKGESGLA (171 aa)). Residues 47 to 65 (LPGRDGRDGREGPRGEKGD) are compositionally biased toward basic and acidic residues. A 4-hydroxyproline modification is found at P78. 5-hydroxylysine is present on K87. A glycan (N-linked (GlcNAc...) asparagine) is linked at N90. A 4-hydroxyproline modification is found at P96. K99 bears the 5-hydroxylysine mark. Over residues 139–148 (GPKGGVGAPG) the composition is skewed to gly residues. P165 and P171 each carry 4-hydroxyproline. The span at 165 to 191 (PGEPGAPGRAGAPGPAGAIGPQGPSGA) shows a compositional bias: low complexity. Residues 198–210 (KGDRGTPGERGAK) show a composition bias toward basic and acidic residues. Positions 217 to 248 (EVNALRQRVGILEGQLQRLQNAFSQYKKAMLF) form a coiled coil. Residues 254 to 369 (VGEKIFKTEG…GEQRLVICEF (116 aa)) enclose the C-type lectin domain. 2 disulfides stabilise this stretch: C275/C367 and C345/C359.

The protein belongs to the SFTPD family. Oligomeric complex of 4 set of homotrimers. In terms of processing, hydroxylation on proline residues within the sequence motif, GXPG, is most likely to be 4-hydroxy as this fits the requirement for 4-hydroxylation in vertebrates. Post-translationally, S-nitrosylation at Cys-35 and Cys-40 alters the quaternary structure which results in a pro-inflammatory chemoattractive signaling activity with macrophages.

It localises to the secreted. The protein resides in the extracellular space. The protein localises to the extracellular matrix. Its subcellular location is the surface film. Its function is as follows. Contributes to the lung's defense against inhaled microorganisms, organic antigens and toxins. Interacts with compounds such as bacterial lipopolysaccharides, oligosaccharides and fatty acids and modulates leukocyte action in immune response. May participate in the extracellular reorganization or turnover of pulmonary surfactant. Binds strongly maltose residues and to a lesser extent other alpha-glucosyl moieties. This Bos taurus (Bovine) protein is Pulmonary surfactant-associated protein D (SFTPD).